A 263-amino-acid chain; its full sequence is Phosphatidylserine decarboxylase proenzyme (263 aa).

Catalysis depends on charge relay system; for autoendoproteolytic cleavage activity residues Asp-90, His-146, and Ser-230. Ser-230 functions as the Schiff-base intermediate with substrate; via pyruvic acid; for decarboxylase activity in the catalytic mechanism. Pyruvic acid (Ser); by autocatalysis is present on Ser-230.

This sequence belongs to the phosphatidylserine decarboxylase family. PSD-B subfamily. Prokaryotic type I sub-subfamily. As to quaternary structure, heterodimer of a large membrane-associated beta subunit and a small pyruvoyl-containing alpha subunit. Requires pyruvate as cofactor. Post-translationally, is synthesized initially as an inactive proenzyme. Formation of the active enzyme involves a self-maturation process in which the active site pyruvoyl group is generated from an internal serine residue via an autocatalytic post-translational modification. Two non-identical subunits are generated from the proenzyme in this reaction, and the pyruvate is formed at the N-terminus of the alpha chain, which is derived from the carboxyl end of the proenzyme. The autoendoproteolytic cleavage occurs by a canonical serine protease mechanism, in which the side chain hydroxyl group of the serine supplies its oxygen atom to form the C-terminus of the beta chain, while the remainder of the serine residue undergoes an oxidative deamination to produce ammonia and the pyruvoyl prosthetic group on the alpha chain. During this reaction, the Ser that is part of the protease active site of the proenzyme becomes the pyruvoyl prosthetic group, which constitutes an essential element of the active site of the mature decarboxylase.

Its subcellular location is the cell membrane. It carries out the reaction a 1,2-diacyl-sn-glycero-3-phospho-L-serine + H(+) = a 1,2-diacyl-sn-glycero-3-phosphoethanolamine + CO2. It functions in the pathway phospholipid metabolism; phosphatidylethanolamine biosynthesis; phosphatidylethanolamine from CDP-diacylglycerol: step 2/2. Its function is as follows. Catalyzes the formation of phosphatidylethanolamine (PtdEtn) from phosphatidylserine (PtdSer). The polypeptide is Phosphatidylserine decarboxylase proenzyme (Bacillus subtilis (strain 168)).